The chain runs to 611 residues: Chaperone protein DnaK (611 aa).

T173 is modified (phosphothreonine; by autocatalysis). Residues 577 to 592 are compositionally biased toward low complexity; it reads QAAAGQAEGAQGAQDA. The segment at 577–611 is disordered; it reads QAAAGQAEGAQGAQDAGTKKDNVVDAEFEEVKEDK. Acidic residues predominate over residues 600–611; that stretch reads VDAEFEEVKEDK.

The protein belongs to the heat shock protein 70 family.

Acts as a chaperone. This Bacillus cereus (strain G9842) protein is Chaperone protein DnaK.